The sequence spans 508 residues: Hydroxymethylglutaryl-CoA synthase, mitochondrial (508 aa).

A mitochondrion-targeting transit peptide spans 1–37 (MQRLLTPVKRILQLTRAVQETSLTPARLLPVAHQRFS). Residue K52 is modified to N6-succinyllysine. (3S)-3-hydroxy-3-methylglutaryl-CoA is bound by residues E80 and A81. Residue K83 is modified to N6-acetyllysine; alternate. K83 is modified (N6-succinyllysine; alternate). E132 (proton donor/acceptor) is an active-site residue. (3S)-3-hydroxy-3-methylglutaryl-CoA-binding residues include C166, N204, and T208. Residue C166 is the Acyl-thioester intermediate of the active site. Position 221 is an N6-succinyllysine (K221). N6-acetyllysine is present on K243. K256 carries the N6-acetyllysine; alternate modification. Residue K256 is modified to N6-succinyllysine; alternate. 2 residues coordinate (3S)-3-hydroxy-3-methylglutaryl-CoA: S258 and H301. The Proton donor/acceptor role is filled by H301. Position 306 is an N6-acetyllysine (K306). K310 provides a ligand contact to (3S)-3-hydroxy-3-methylglutaryl-CoA. Position 310 is an N6-acetyllysine; alternate (K310). N6-succinyllysine; alternate is present on K310. N6-succinyllysine is present on K333. 4 positions are modified to N6-acetyllysine; alternate: K342, K350, K354, and K358. N6-succinyllysine; alternate occurs at positions 342, 350, 354, and 358. (3S)-3-hydroxy-3-methylglutaryl-CoA is bound by residues N380 and S414. S433 bears the Phosphoserine mark. The residue at position 437 (K437) is an N6-acetyllysine. Phosphoserine is present on S440. An N6-acetyllysine; alternate modification is found at K447. K447 is modified (N6-succinyllysine; alternate). A Phosphoserine modification is found at S456. An N6-acetyllysine; alternate modification is found at K473. Residue K473 is modified to N6-succinyllysine; alternate. A Phosphoserine modification is found at S477.

Belongs to the thiolase-like superfamily. HMG-CoA synthase family. As to quaternary structure, homodimer. Succinylated. Desuccinylated by SIRT5. Succinylation, at least at Lys-83 and Lys-310, inhibits the enzymatic activity. In terms of tissue distribution, expression in liver is 200-fold higher than in any other tissue. Low expression in colon, kidney, testis, and pancreas. Very low expression in heart and skeletal muscle. Not detected in brain. Highest expression detected in heart and skeletal muscle.

Its subcellular location is the mitochondrion. The enzyme catalyses acetoacetyl-CoA + acetyl-CoA + H2O = (3S)-3-hydroxy-3-methylglutaryl-CoA + CoA + H(+). The protein operates within metabolic intermediate biosynthesis; (R)-mevalonate biosynthesis; (R)-mevalonate from acetyl-CoA: step 2/3. Functionally, catalyzes the first irreversible step in ketogenesis, condensing acetyl-CoA to acetoacetyl-CoA to form HMG-CoA, which is converted by HMG-CoA reductase (HMGCR) into mevalonate. This chain is Hydroxymethylglutaryl-CoA synthase, mitochondrial (HMGCS2), found in Homo sapiens (Human).